A 1064-amino-acid chain; its full sequence is MASESETLNPSARIMTFYPTMEEFRNFSRYIAYIESQGAHRAGLAKVVPPKEWKPRTSYDDIDDLVIPAPIQQLVTGQSGLFTQYNIQKKAMTVREFRKIANSDKYCTPRYSEFEELERKYWKNLTFNPPIYGADVNGTLYEQHVDEWNIGRLKTILDLVEKESGITIEGVNTPYLYFGMWKTSFAWHTEDMDLYSINYLHFGEPKSWYSVPPEHGKRLERLAKGFFPGSAQSCEAFLRHKMTLISPLMLKKYGIPFDKVTQEAGEFMITFPYGYHAGFNHGFNCAESTNFATRRWIEYGKQAVLCSCRKDMVKISMDVFVRRFQPERYKLWKAGKDSMVIDHTLPTPEAAEFLKDSGGLTPRAGSEECPEEDVEAADQGEEGDVKRSLAKHRIGTKRHRVCLEIPQEVSQSELFPKEELSSGQYEMTECPATLAPVRPTHSSVRQVEDSLPFPDYSDPTEVKFEELKNVKLEEEDEEDEPEAAALDLSVNPASVGGRLVFSGSKKKSSSSLGSTSSQDSVSSDSETAESVSCQGQEKTGVLTVHSYARGDGKAATGEPSVKKKRSAPRSISEQELAEVADEYMLSLEENKKTKGRRQPLSKLPRHHPLVLQECGSDDETSEQLTPEEEAEETEAWAKPLSQLWQNRPPNFEAEKEFNEIMAQQAPHCAVCMIFQTYHQVEFGAFSQSCGDASEPAAQTQRTKPLIPEMCFTTTGCSTDINLSTPYLEEDGTSMLVSCKKCSVRVHASCYGVPPAKASEEWMCSRCSANALEEDCCLCSLRGGALQRANDDRWVHVSCAVAILEARFVNIAERSPVDVSKIPLPRFKLKCVFCKKRRKRNAGCCVQCSHGRCPTAFHVSCAQAAGVMMQPDDWPFVVFITCFRHKIPNLERAKGALLSITAGQKVISKHKNGRFYQCEVVRLTTETFYEVNFDDGSFSDNLYPEDIVSQDCLQLGPPAEGEVVQVRWTDGQVYGAKFVASHPIQMYQVEFEDGSQLVVKRDDVYTLDEELPKRVKSRLSVASDMRFNEIFTEKEVKQEKKRQRVINSRYREDYIEPALYRAIME.

Ala2 carries the post-translational modification N-acetylalanine. A JmjN domain is found at 14-56 (IMTFYPTMEEFRNFSRYIAYIESQGAHRAGLAKVVPPKEWKPR). 2-oxoglutarate is bound at residue Tyr132. In terms of domain architecture, JmjC spans 142 to 308 (EQHVDEWNIG…YGKQAVLCSC (167 aa)). Fe cation-binding residues include His188 and Glu190. Residues Asn198 and Lys206 each coordinate 2-oxoglutarate. Zn(2+)-binding residues include Cys234 and His240. Lys241 is a 2-oxoglutarate binding site. His276 is a Fe cation binding site. Residues Cys306 and Cys308 each coordinate Zn(2+). Disordered stretches follow at residues 354–384 (LKDS…EEGD), 434–489 (LAPV…LDLS), 502–537 (SGSK…QGQE), 549–573 (RGDG…SISE), and 590–643 (NKKT…LSQL). The segment covering 368 to 382 (ECPEEDVEAADQGEE) has biased composition (acidic residues). Over residues 460-472 (TEVKFEELKNVKL) the composition is skewed to basic and acidic residues. Positions 473–482 (EEEDEEDEPE) are enriched in acidic residues. The span at 509 to 525 (SSSLGSTSSQDSVSSDS) shows a compositional bias: low complexity. Ser523 carries the post-translational modification Phosphoserine. The segment covering 528–537 (AESVSCQGQE) has biased composition (polar residues). Over residues 593-608 (TKGRRQPLSKLPRHHP) the composition is skewed to basic residues. The segment at 597 to 638 (RQPLSKLPRHHPLVLQECGSDDETSEQLTPEEEAEETEAWAK) is interaction with NCOR1. Positions 615-634 (GSDDETSEQLTPEEEAEETE) are enriched in acidic residues. A PHD-type 1 zinc finger spans residues 709-767 (MCFTTTGCSTDINLSTPYLEEDGTSMLVSCKKCSVRVHASCYGVPPAKASEEWMCSRCS). The C2HC pre-PHD-type zinc-finger motif lies at 772-805 (EEDCCLCSLRGGALQRANDDRWVHVSCAVAILEA). The segment at 828 to 885 (LKCVFCKKRRKRNAGCCVQCSHGRCPTAFHVSCAQAAGVMMQPDDWPFVVFITCFRHK) adopts a PHD-type 2 zinc-finger fold. 2 consecutive Tudor domains span residues 897–954 (LSIT…CLQL) and 955–1011 (GPPA…EELP).

This sequence belongs to the JHDM3 histone demethylase family. In terms of assembly, interacts with histone deacetylase proteins HDAC1, HDAC2 and HDAC3. Interacts with RB and NCOR1. Interacts with VRK1. Fe(2+) is required as a cofactor. Post-translationally, ubiquitinated by RNF8 and RNF168, leading to its degradation. Degradation promotes accessibility of H4K20me2 mark for DNA repair protein TP53BP1, which is then recruited. Also ubiquitinated by the SCF(FBXO22) complex; leading to proteasomal degradation. In terms of tissue distribution, widely expressed.

The protein resides in the nucleus. It catalyses the reaction N(6),N(6),N(6)-trimethyl-L-lysyl(9)-[histone H3] + 2 2-oxoglutarate + 2 O2 = N(6)-methyl-L-lysyl(9)-[histone H3] + 2 formaldehyde + 2 succinate + 2 CO2. The catalysed reaction is N(6),N(6),N(6)-trimethyl-L-lysyl(36)-[histone H3] + 2 2-oxoglutarate + 2 O2 = N(6)-methyl-L-lysyl(36)-[histone H3] + 2 formaldehyde + 2 succinate + 2 CO2. In terms of biological role, histone demethylase that specifically demethylates 'Lys-9' and 'Lys-36' residues of histone H3, thereby playing a central role in histone code. Does not demethylate histone H3 'Lys-4', H3 'Lys-27' nor H4 'Lys-20'. Demethylates trimethylated H3 'Lys-9' and H3 'Lys-36' residue, while it has no activity on mono- and dimethylated residues. Demethylation of Lys residue generates formaldehyde and succinate. Participates in transcriptional repression of ASCL2 and E2F-responsive promoters via the recruitment of histone deacetylases and NCOR1, respectively. This chain is Lysine-specific demethylase 4A (Kdm4a), found in Mus musculus (Mouse).